Consider the following 130-residue polypeptide: Ribonuclease P protein component 2 (130 aa).

It belongs to the eukaryotic/archaeal RNase P protein component 2 family. As to quaternary structure, consists of a catalytic RNA component and at least 4-5 protein subunits.

Its subcellular location is the cytoplasm. The catalysed reaction is Endonucleolytic cleavage of RNA, removing 5'-extranucleotides from tRNA precursor.. Functionally, part of ribonuclease P, a protein complex that generates mature tRNA molecules by cleaving their 5'-ends. The chain is Ribonuclease P protein component 2 from Methanococcus maripaludis (strain C7 / ATCC BAA-1331).